We begin with the raw amino-acid sequence, 374 residues long: Alanine racemase (374 aa).

The active-site Proton acceptor; specific for D-alanine is the Lys-35. N6-(pyridoxal phosphate)lysine is present on Lys-35. Residue Arg-133 participates in substrate binding. Tyr-261 (proton acceptor; specific for L-alanine) is an active-site residue. Met-315 contacts substrate.

This sequence belongs to the alanine racemase family. It depends on pyridoxal 5'-phosphate as a cofactor.

It carries out the reaction L-alanine = D-alanine. Its pathway is amino-acid biosynthesis; D-alanine biosynthesis; D-alanine from L-alanine: step 1/1. In terms of biological role, catalyzes the interconversion of L-alanine and D-alanine. May also act on other amino acids. The protein is Alanine racemase (alr) of Psychrobacter sp. (strain PRwf-1).